Reading from the N-terminus, the 75-residue chain is Transaldolase (75 aa).

It belongs to the transaldolase family. Type 1 subfamily. In terms of assembly, homodimer. Phosphorylated. As to expression, predominantly expressed in Y-organs.

The protein resides in the cytoplasm. It carries out the reaction D-sedoheptulose 7-phosphate + D-glyceraldehyde 3-phosphate = D-erythrose 4-phosphate + beta-D-fructose 6-phosphate. It participates in carbohydrate degradation; pentose phosphate pathway; D-glyceraldehyde 3-phosphate and beta-D-fructose 6-phosphate from D-ribose 5-phosphate and D-xylulose 5-phosphate (non-oxidative stage): step 2/3. Functionally, transaldolase is important for the balance of metabolites in the pentose-phosphate pathway. May play a role in the conversion of sterols into ecdysteroids via NADPH. In Carcinus maenas (Common shore crab), this protein is Transaldolase.